The primary structure comprises 349 residues: Sterol-4-alpha-carboxylate 3-dehydrogenase ERG26, decarboxylating (349 aa).

NADP(+) contacts are provided by residues 11 to 17 (GGSGFLG), 62 to 63 (DL), and 84 to 86 (CAS). The substrate site is built by Ser124 and Tyr151. Residues Tyr151, Lys155, and 179–182 (PAGI) contribute to the NADP(+) site. The active-site Proton donor is the Lys155.

It belongs to the 3-beta-HSD family. In terms of assembly, heterotetramer of ERG25, ERG26, ERG27 and ERG28. ERG28 acts as a scaffold to tether ERG27 and other 4,4-demethylation-related enzymes, forming a demethylation enzyme complex, in the endoplasmic reticulum.

It is found in the endoplasmic reticulum membrane. It carries out the reaction 4beta-methylzymosterol-4alpha-carboxylate + NADP(+) = 3-dehydro-4-methylzymosterol + CO2 + NADPH. It participates in steroid biosynthesis; zymosterol biosynthesis; zymosterol from lanosterol: step 4/6. Its activity is regulated as follows. Inhibited by FR171456, a natural product with broad antifungal activity. Sterol-4-alpha-carboxylate 3-dehydrogenase; part of the third module of ergosterol biosynthesis pathway that includes the late steps of the pathway. ERG26 is a catalytic component of the C-4 demethylation complex that catalyzes the oxidative decarboxylation that results in a reduction of the 3-beta-hydroxy group at the C-3 carbon to an oxo group. The third module or late pathway involves the ergosterol synthesis itself through consecutive reactions that mainly occur in the endoplasmic reticulum (ER) membrane. Firstly, the squalene synthase ERG9 catalyzes the condensation of 2 farnesyl pyrophosphate moieties to form squalene, which is the precursor of all steroids. Squalene synthase is crucial for balancing the incorporation of farnesyl diphosphate (FPP) into sterol and nonsterol isoprene synthesis. Secondly, the squalene epoxidase ERG1 catalyzes the stereospecific oxidation of squalene to (S)-2,3-epoxysqualene, which is considered to be a rate-limiting enzyme in steroid biosynthesis. Then, the lanosterol synthase ERG7 catalyzes the cyclization of (S)-2,3 oxidosqualene to lanosterol, a reaction that forms the sterol core. In the next steps, lanosterol is transformed to zymosterol through a complex process involving various demethylation, reduction and desaturation reactions. The lanosterol 14-alpha-demethylase ERG11 (also known as CYP51) catalyzes C14-demethylation of lanosterol to produce 4,4'-dimethyl cholesta-8,14,24-triene-3-beta-ol, which is critical for ergosterol biosynthesis. The C-14 reductase ERG24 reduces the C14=C15 double bond of 4,4-dimethyl-cholesta-8,14,24-trienol to produce 4,4-dimethyl-cholesta-8,24-dienol. 4,4-dimethyl-cholesta-8,24-dienol is substrate of the C-4 demethylation complex ERG25-ERG26-ERG27 in which ERG25 catalyzes the three-step monooxygenation required for the demethylation of 4,4-dimethyl and 4alpha-methylsterols, ERG26 catalyzes the oxidative decarboxylation that results in a reduction of the 3-beta-hydroxy group at the C-3 carbon to an oxo group, and ERG27 is responsible for the reduction of the keto group on the C-3. ERG28 has a role as a scaffold to help anchor ERG25, ERG26 and ERG27 to the endoplasmic reticulum and ERG29 regulates the activity of the iron-containing C4-methylsterol oxidase ERG25. Then, the sterol 24-C-methyltransferase ERG6 catalyzes the methyl transfer from S-adenosyl-methionine to the C-24 of zymosterol to form fecosterol. The C-8 sterol isomerase ERG2 catalyzes the reaction which results in unsaturation at C-7 in the B ring of sterols and thus converts fecosterol to episterol. The sterol-C5-desaturase ERG3 then catalyzes the introduction of a C-5 double bond in the B ring to produce 5-dehydroepisterol. The C-22 sterol desaturase ERG5 further converts 5-dehydroepisterol into ergosta-5,7,22,24(28)-tetraen-3beta-ol by forming the C-22(23) double bond in the sterol side chain. Finally, ergosta-5,7,22,24(28)-tetraen-3beta-ol is substrate of the C-24(28) sterol reductase ERG4 to produce ergosterol. This chain is Sterol-4-alpha-carboxylate 3-dehydrogenase ERG26, decarboxylating, found in Saccharomyces cerevisiae (strain ATCC 204508 / S288c) (Baker's yeast).